The following is a 103-amino-acid chain: Integration host factor subunit alpha (103 aa).

It belongs to the bacterial histone-like protein family. As to quaternary structure, heterodimer of an alpha and a beta chain.

Functionally, this protein is one of the two subunits of integration host factor, a specific DNA-binding protein that functions in genetic recombination as well as in transcriptional and translational control. This Aromatoleum aromaticum (strain DSM 19018 / LMG 30748 / EbN1) (Azoarcus sp. (strain EbN1)) protein is Integration host factor subunit alpha.